A 620-amino-acid polypeptide reads, in one-letter code: Zinc metalloproteinase-disintegrin-like ACLD (620 aa).

A signal peptide spans Met1 to Ser20. Positions Ile21–Pro189 are excised as a propeptide. The Peptidase M12B domain occupies Lys199–Pro395. Glu202 contributes to the Ca(2+) binding site. Residues Asn259 and Asn265 are each glycosylated (N-linked (GlcNAc...) asparagine). Asp286 is a binding site for Ca(2+). 3 disulfide bridges follow: Cys310/Cys390, Cys350/Cys374, and Cys352/Cys357. His335 lines the Zn(2+) pocket. The active site involves Glu336. Residues His339 and His345 each contribute to the Zn(2+) site. Asn373 is a glycosylation site (N-linked (GlcNAc...) asparagine). Ca(2+)-binding residues include Cys390 and Asn393. N-linked (GlcNAc...) asparagine glycosylation occurs at Asn396. Residues Pro403–Asn489 enclose the Disintegrin domain. Ca(2+)-binding residues include Val405, Asn408, Leu410, Glu412, Glu415, and Asp418. Intrachain disulfides connect Cys406–Cys435, Cys417–Cys430, Cys419–Cys425, Cys429–Cys452, Cys443–Cys449, Cys448–Cys474, Cys461–Cys481, Cys468–Cys500, Cys493–Cys505, Cys512–Cys562, Cys527–Cys573, Cys540–Cys550, Cys557–Cys599, and Cys593–Cys604. Positions Asp467 to Asp469 match the D/ECD-tripeptide motif. N-linked (GlcNAc...) asparagine glycans are attached at residues Asn502 and Asn536.

Belongs to the venom metalloproteinase (M12B) family. P-III subfamily. P-IIIa sub-subfamily. As to quaternary structure, monomer. The cofactor is Zn(2+). Expressed by the venom gland.

The protein resides in the secreted. With respect to regulation, inhibited by EDTA and O-phenanthroline. Not inhibited by PMSF, benzamidine, irreversible serine-proteinase inhibitors and cysteine proteinase inhibitor E-64. In terms of biological role, is a potent activator of prothrombin (F2). Does not elicit any hemorrhagic response. Barely inhibits collagen-induced platelet aggregation. Binds neither collagen, nor the jararhagin-monoclonal antibody MAJar3. Hydrolyzes the Aalpha-chain of fibrin and fibrinogen, without affecting the Bbeta- and gamma-chains. Is capable of triggering endothelial pro-inflammatory and procoagulant cell responses, but fails to trigger apoptosis. Induces von Willebrand factor release, and the expression of both ICAM1 and E-selectin (SELE) (without increase in VCAM1) in endothelial cells (HUVEC). Is also able to up-regulate the synthesis of the coagulation factor TF (F3). Enhances nitric oxide (NO) generation, prostacyclin production and interleukin-8 release. In Agkistrodon contortrix laticinctus (Broad-banded copperhead), this protein is Zinc metalloproteinase-disintegrin-like ACLD.